We begin with the raw amino-acid sequence, 231 residues long: MRRTVIGDETTARDVARADWVAGAGGVVRVGLTGGIASGKSTVSQMLGERGAVIIDYDRLSRDVVAVGTQGLAQVVEAFGREVLVADGSLNRSALGSIVFADLQARRRLEAIIHPLVEEAAHRVDEEARAADGLVVVVHDIPLLVETGRADEFDVVMVTDVDPAEQVRRVVERDGCSQADAWARIHAQASREEHLAVADVIIDTSVPLEDLPEQIDRVWSRIAGALRFDRR.

The region spanning 29-231 (RVGLTGGIAS…IAGALRFDRR (203 aa)) is the DPCK domain. 37–42 (ASGKST) lines the ATP pocket.

This sequence belongs to the CoaE family.

It localises to the cytoplasm. The catalysed reaction is 3'-dephospho-CoA + ATP = ADP + CoA + H(+). It participates in cofactor biosynthesis; coenzyme A biosynthesis; CoA from (R)-pantothenate: step 5/5. Functionally, catalyzes the phosphorylation of the 3'-hydroxyl group of dephosphocoenzyme A to form coenzyme A. In Cutibacterium acnes (strain DSM 16379 / KPA171202) (Propionibacterium acnes), this protein is Dephospho-CoA kinase.